The primary structure comprises 117 residues: Large ribosomal subunit protein uL18 (117 aa).

This sequence belongs to the universal ribosomal protein uL18 family. As to quaternary structure, part of the 50S ribosomal subunit; part of the 5S rRNA/L5/L18/L25 subcomplex. Contacts the 5S and 23S rRNAs.

In terms of biological role, this is one of the proteins that bind and probably mediate the attachment of the 5S RNA into the large ribosomal subunit, where it forms part of the central protuberance. The sequence is that of Large ribosomal subunit protein uL18 from Photorhabdus laumondii subsp. laumondii (strain DSM 15139 / CIP 105565 / TT01) (Photorhabdus luminescens subsp. laumondii).